The primary structure comprises 197 residues: Non-structural protein 5 (197 aa).

A disordered region spans residues 16–36 (NIFKNESSSTTSTLSGKSIGR). At S67 the chain carries Phosphoserine; by host CK1. Mg(2+) is bound at residue D92. The interval 130–167 (TNHKKEKSKKDKSRKHYPRIEADSDSEDYVLDDSDSDD) is disordered. Positions 131 to 146 (NHKKEKSKKDKSRKHY) are enriched in basic residues. The span at 152–165 (DSDSEDYVLDDSDS) shows a compositional bias: acidic residues. Residues S153, S155, S163, and S165 each carry the phosphoserine; by host modification.

This sequence belongs to the rotavirus NSP5 family. As to quaternary structure, homodimer. Interacts with VP1. Interacts with VP2. Interacts with NSP2; this interaction leads to up-regulation of NSP5 hyperphosphorylation and formation of virus factories. Interacts with NSP6. Participates in the selective exclusion of host proteins from stress granules (SG) and P bodies (PB). Also participates in the sequestration of these remodeled organelles in viral factories. Mg(2+) is required as a cofactor. In terms of processing, O-glycosylated. Post-translationally, hyperphosphorylated on serine residues, when in dimeric form. Phosphorylation by host CK1 is required for the hyperphosphorylation of NSP5 dimer.

It is found in the host cytoplasm. Plays an essential role in the viral genome replication. Participates, together with NSP2, in the formation of viral factories (viroplasms), which are large inclusions in the host cytoplasm where replication intermediates are assembled and viral RNA replication takes place. Orchestrates the recruitment of viroplasmic proteins such as capsid proteins to these factories. Participates in the selective exclusion of host proteins from stress granules (SG) and P bodies (PB). Also participates in the sequestration of these remodeled organelles in viral factories. This chain is Non-structural protein 5, found in Homo sapiens (Human).